A 577-amino-acid chain; its full sequence is MFS-type transporter pgmG (577 aa).

The interval 1–32 (MSETVTQTETDQRPATARSLGAEEKEAKSDEQ) is disordered. The segment covering 21–31 (GAEEKEAKSDE) has biased composition (basic and acidic residues). 8 consecutive transmembrane segments (helical) span residues 45–65 (FIVIISILSSVTLYSLDNTIV), 84–104 (WLSVAFLVACVATNSIWSKIY), 111–131 (WLYLFCVVLFEVGSAMCGAAP), 141–161 (ALAGLGGAGLYVGVMTLLSVN), 174–194 (TGLTWGVGTVLGPIVGGGFAV), 218–238 (PLTVPPVFFAAVAIPIYLFML), 259–279 (LGTILMIGACVSGVMAINFGG), and 292–312 (CFVVSGVLFIVFGLQQWYCIG). The N-linked (GlcNAc...) asparagine glycan is linked to N317. The chain crosses the membrane as a helical span at residues 330 to 350 (FIILFVQTASVATVFFVPIYF). A glycan (N-linked (GlcNAc...) asparagine) is linked at N360. The next 5 membrane-spanning stretches (helical) occupy residues 363 to 383 (AIDAGVRLLPLVCFIVAAMIL), 395 to 415 (MPWYLVGGCLSLVGSVLMYTI), 426 to 446 (GYMIILGVGGGMYAQASFAVA), 457 to 477 (VATGFISLAQLTGGTIALAIA), and 532 to 552 (ISQVYILPITGAAMSISLAIF).

It belongs to the major facilitator superfamily. TCR/Tet family.

The protein resides in the membrane. In terms of biological role, MFS-type transporter; part of the gene cluster that mediates the biosynthesis of pleosporalin A, ascomycone A, as well as a third cryptic naphthoquinone derived pigment, all responsible for the coloration of conidia. Seems not to be involved in pigment biosynthesis although its expression is regulated by the cluster-specific transcription factor pgmR. The protein is MFS-type transporter pgmG of Aspergillus terreus (strain NIH 2624 / FGSC A1156).